Reading from the N-terminus, the 107-residue chain is Metallothionein-1 (107 aa).

This sequence belongs to the metallothionein superfamily. Type 7 family.

In terms of biological role, the metallothioneins are involved in the cellular sequestration of toxic metal ions. Binds 12 cadmium ions per molecule. The chain is Metallothionein-1 from Tetrahymena thermophila.